We begin with the raw amino-acid sequence, 415 residues long: Corticotropin-releasing factor receptor 1 (415 aa).

Residues 1–23 (MGRRPQLRLVKALLLLGLNPVST) form the signal peptide. The Extracellular portion of the chain corresponds to 24 to 111 (SLQDQRCENL…CQEILNEEKK (88 aa)). 3 disulfides stabilise this stretch: Cys-30–Cys-54, Cys-44–Cys-87, and Cys-68–Cys-102. 5 N-linked (GlcNAc...) asparagine glycosylation sites follow: Asn-38, Asn-45, Asn-78, Asn-90, and Asn-98. The interval 99-108 (YSECQEILNE) is important for peptide agonist binding. A helical transmembrane segment spans residues 112–142 (SKVHYHVAVIINYLGHCISLVALLVAFVLFL). At 143–149 (RLRSIRC) the chain is on the cytoplasmic side. Residues 150 to 174 (LRNIIHWNLISAFILRNATWFVVQL) form a helical membrane-spanning segment. Residues 175-189 (TVSPEVHQSNVAWCR) are Extracellular-facing. An intrachain disulfide couples Cys-188 to Cys-258. The chain crosses the membrane as a helical span at residues 190-218 (LVTAAYNYFHVTNFFWMFGEGCYLHTAIV). At 219–225 (LTYSTDR) the chain is on the cytoplasmic side. The helical transmembrane segment at 226-253 (LRKWMFVCIGWGVPFPIIVAWAIGKLHY) threads the bilayer. Residues 254 to 269 (DNEKCWFGKRPGVYTD) are Extracellular-facing. The helical transmembrane segment at 270–295 (YIYQGPMILVLLINFIFLFNIVRILM) threads the bilayer. The important for antagonist binding stretch occupies residues 280-290 (LLINFIFLFNI). Over 296-306 (TKLRASTTSET) the chain is Cytoplasmic. Ser-301 carries the phosphoserine; by PKA modification. Residues 307-331 (IQYRKAVKATLVLLPLLGITYMLFF) form a helical membrane-spanning segment. Over 332–338 (VNPGEDE) the chain is Extracellular. The chain crosses the membrane as a helical span at residues 339–368 (VSRVVFIYFNSFLESFQGFFVSVFYCFLNS). Topologically, residues 369–415 (EVRSAIRKRWRRWQDKHSIRARVARAMSIPTSPTRVSFHSIKQSTAV) are cytoplasmic.

This sequence belongs to the G-protein coupled receptor 2 family. In terms of assembly, interacts (via N-terminal extracellular domain) with CRH and UCN. Interacts with DLG1; this inhibits endocytosis of CRHR1 after agonist binding. Heterodimer; heterodimerizes with GPER1. C-terminal Ser or Thr residues may be phosphorylated. In terms of processing, phosphorylation at Ser-301 by PKA prevents maximal coupling to Gq-protein, and thereby negatively regulates downstream signaling. Detected in brain, especially in cerebellum. Detected in pituitary gland, and at lower levels in the olfactory bulb.

Its subcellular location is the cell membrane. It localises to the endosome. Functionally, G-protein coupled receptor for CRH (corticotropin-releasing factor) and UCN (urocortin). Has high affinity for CRH and UCN. Ligand binding causes a conformation change that triggers signaling via guanine nucleotide-binding proteins (G proteins) and down-stream effectors, such as adenylate cyclase. Promotes the activation of adenylate cyclase, leading to increased intracellular cAMP levels. Inhibits the activity of the calcium channel CACNA1H. Required for normal embryonic development of the adrenal gland and for normal hormonal responses to stress. Plays a role in the response to anxiogenic stimuli. This Rattus norvegicus (Rat) protein is Corticotropin-releasing factor receptor 1 (Crhr1).